The chain runs to 309 residues: HPr kinase/phosphorylase (309 aa).

Catalysis depends on residues His138 and Lys159. Position 153–160 (153–160 (GQSGVGKS)) interacts with ATP. Mg(2+) is bound at residue Ser160. Catalysis depends on Asp177, which acts as the Proton acceptor; for phosphorylation activity. Proton donor; for dephosphorylation activity. The interval 201 to 210 (LEIRGLGIIN) is important for the catalytic mechanism of both phosphorylation and dephosphorylation. Glu202 serves as a coordination point for Mg(2+). Arg243 is a catalytic residue. The segment at 264–269 (PVRPGR) is important for the catalytic mechanism of dephosphorylation.

The protein belongs to the HPrK/P family. In terms of assembly, homohexamer. It depends on Mg(2+) as a cofactor.

It catalyses the reaction [HPr protein]-L-serine + ATP = [HPr protein]-O-phospho-L-serine + ADP + H(+). It carries out the reaction [HPr protein]-O-phospho-L-serine + phosphate + H(+) = [HPr protein]-L-serine + diphosphate. Catalyzes the ATP- as well as the pyrophosphate-dependent phosphorylation of a specific serine residue in HPr, a phosphocarrier protein of the phosphoenolpyruvate-dependent sugar phosphotransferase system (PTS). HprK/P also catalyzes the pyrophosphate-producing, inorganic phosphate-dependent dephosphorylation (phosphorolysis) of seryl-phosphorylated HPr (P-Ser-HPr). The two antagonistic activities of HprK/P are regulated by several intracellular metabolites, which change their concentration in response to the absence or presence of rapidly metabolisable carbon sources (glucose, fructose, etc.) in the growth medium. Also phosphorylates/dephosphorylates the HPr-like catabolite repression protein crh on a specific serine residue. Therefore, by controlling the phosphorylation state of HPr and crh, HPrK/P is a sensor enzyme that plays a major role in the regulation of carbon metabolism and sugar transport: it mediates carbon catabolite repression (CCR), and regulates PTS-catalyzed carbohydrate uptake and inducer exclusion. This chain is HPr kinase/phosphorylase, found in Bacillus cytotoxicus (strain DSM 22905 / CIP 110041 / 391-98 / NVH 391-98).